A 582-amino-acid polypeptide reads, in one-letter code: BTB/POZ domain and ankyrin repeat-containing protein NPR1 (582 aa).

Over residues 1–12 the composition is skewed to polar residues; it reads MEPPTSHVTNAF. Residues 1–27 form a disordered region; that stretch reads MEPPTSHVTNAFSDSDSASVEEGDADA. In terms of domain architecture, BTB spans 55–140; that stretch reads ADARIAVPGG…VLDYLYSGRV (86 aa). The C2HC NPR-type zinc-finger motif lies at 147 to 161; it reads ACLCVDEDCAHVGCH. 4 residues coordinate Zn(2+): C150, C155, H157, and C160. ANK repeat units follow at residues 229–258, 269–299, 301–328, and 332–361; these read RSNLDMITLEKSLPPDVIKQIIDARLSLGL, KHVRRIHRALDSDDVELVRMLLTEGQTNLDD, FALHYAVEHCDSKITTELLDLALADVNH, and RGYTVLHIAARRREPKIIVSLLTKGARPAD. The salicylic acid-binding core (SBC) stretch occupies residues 391 to 526; it reads PSPKDRLCIE…VLDKIMDDET (136 aa). R436 serves as a coordination point for salicylate. 2 disordered regions span residues 525-544 and 551-582; these read ETDPVSLGRDTSAEKRKRFH and QKAFHEDKEENDRSGLSSSSSSTSIGAIRPRR. A compositionally biased stretch (basic and acidic residues) spans 553-563; it reads AFHEDKEENDR. Residues 564–574 are compositionally biased toward low complexity; sequence SGLSSSSSSTS.

Belongs to the plant 'ANKYRIN-BTB/POZ' family. 'NPR1-like' subfamily. As to quaternary structure, oligomer in an uninduced state; disulfide-linked. Forms activated monomer upon changes in cellular redox potential. Interacts with TGA2.2. Interacts with NRR.

Its subcellular location is the cytoplasm. The protein localises to the nucleus. The protein resides in the nuclear body. Its pathway is protein modification; protein ubiquitination. Functionally, salicylic acid (SA)-binding substrate-specific adapter of an E3 ubiquitin-protein ligase complex (CUL3-RBX1-BTB) which mediates the ubiquitination and subsequent proteasomal degradation of target proteins. Transcription cofactor that represses gene expression in the absence of salicylic acid (SA), when attached to negative cis-elements (W-box) with WRKY transcription factors, but stimulates gene expression upon activation by SA, when sumoylated and attached to positive cis-elements (as-1) with TGA transcription factors, thus confering immunity through a series of gene regulations ending in a significant increase in antimicrobial and defense genes expression. Key positive factor of disease resistance. Involved in defense response against the bacterial blight disease caused by Xanthomonas oryzae pv. oryzae (Xoo). Plants over-expressing NPR1/NH1 acquire high levels of resistance to Xoo, express constitutively defense genes and develop lesion-mimic spots on leaves at pre-flowering stage. Involved in basal resistance to the blast pathogen Magnaporthe oryzae. Plants over-expressing NPR1/NH1 have increased resistance to M.oryzae infection. Plays an essential role in benzothiadiazole (BTH)-induced resistance to the blast fungus disease caused by Magnaporthe oryzae. Functions as a transcriptional coactivator of TGA2.1 and LG2 in vitro. Involved in defense response against herbivore. Plants silencing NPR1/NH1 have increased herbivore-induced trypsin proteinase inhibitors and volatiles, which reduces the performance of the striped stem borer (SSB) Chilo suppressalis. In Oryza sativa subsp. indica (Rice), this protein is BTB/POZ domain and ankyrin repeat-containing protein NPR1.